The chain runs to 787 residues: Endonuclease MutS2 (787 aa).

An ATP-binding site is contributed by 335–342; the sequence is GPNTGGKT. One can recognise a Smr domain in the interval 712–787; it reads LDLRGERYED…GLGNTVIELK (76 aa).

It belongs to the DNA mismatch repair MutS family. MutS2 subfamily. Homodimer. Binds to stalled ribosomes, contacting rRNA.

Functionally, endonuclease that is involved in the suppression of homologous recombination and thus may have a key role in the control of bacterial genetic diversity. Its function is as follows. Acts as a ribosome collision sensor, splitting the ribosome into its 2 subunits. Detects stalled/collided 70S ribosomes which it binds and splits by an ATP-hydrolysis driven conformational change. Acts upstream of the ribosome quality control system (RQC), a ribosome-associated complex that mediates the extraction of incompletely synthesized nascent chains from stalled ribosomes and their subsequent degradation. Probably generates substrates for RQC. This chain is Endonuclease MutS2, found in Shouchella clausii (strain KSM-K16) (Alkalihalobacillus clausii).